A 204-amino-acid chain; its full sequence is Cobalt-containing nitrile hydratase subunit alpha (204 aa).

Residues Cys108, Cys111, Ser112, and Cys113 each contribute to the Co(2+) site. Cys111 is subject to Cysteine sulfinic acid (-SO2H). Cys113 carries the post-translational modification Cysteine sulfenic acid (-SOH).

This sequence belongs to the nitrile hydratase subunit alpha family. In terms of assembly, heterotetramer of two alpha and two beta chains. Co(2+) is required as a cofactor.

It catalyses the reaction an aliphatic primary amide = an aliphatic nitrile + H2O. In terms of biological role, NHase catalyzes the hydration of various nitrile compounds to the corresponding amides. The protein is Cobalt-containing nitrile hydratase subunit alpha of Pseudonocardia thermophila.